The primary structure comprises 393 residues: NAD(P)H-quinone oxidoreductase subunit H, chloroplastic (393 aa).

It belongs to the complex I 49 kDa subunit family. In terms of assembly, NDH is composed of at least 16 different subunits, 5 of which are encoded in the nucleus.

It is found in the plastid. The protein localises to the chloroplast thylakoid membrane. It catalyses the reaction a plastoquinone + NADH + (n+1) H(+)(in) = a plastoquinol + NAD(+) + n H(+)(out). The enzyme catalyses a plastoquinone + NADPH + (n+1) H(+)(in) = a plastoquinol + NADP(+) + n H(+)(out). NDH shuttles electrons from NAD(P)H:plastoquinone, via FMN and iron-sulfur (Fe-S) centers, to quinones in the photosynthetic chain and possibly in a chloroplast respiratory chain. The immediate electron acceptor for the enzyme in this species is believed to be plastoquinone. Couples the redox reaction to proton translocation, and thus conserves the redox energy in a proton gradient. This Draba nemorosa (Woodland whitlowgrass) protein is NAD(P)H-quinone oxidoreductase subunit H, chloroplastic.